The primary structure comprises 174 residues: NADH-quinone oxidoreductase subunit B 2 (174 aa).

[4Fe-4S] cluster-binding residues include Cys-51, Cys-52, Cys-116, and Cys-145.

It belongs to the complex I 20 kDa subunit family. In terms of assembly, NDH-1 is composed of 14 different subunits. Subunits NuoB, C, D, E, F, and G constitute the peripheral sector of the complex. Requires [4Fe-4S] cluster as cofactor.

The protein resides in the cell inner membrane. It carries out the reaction a quinone + NADH + 5 H(+)(in) = a quinol + NAD(+) + 4 H(+)(out). Functionally, NDH-1 shuttles electrons from NADH, via FMN and iron-sulfur (Fe-S) centers, to quinones in the respiratory chain. The immediate electron acceptor for the enzyme in this species is believed to be ubiquinone. Couples the redox reaction to proton translocation (for every two electrons transferred, four hydrogen ions are translocated across the cytoplasmic membrane), and thus conserves the redox energy in a proton gradient. The polypeptide is NADH-quinone oxidoreductase subunit B 2 (Thermodesulfovibrio yellowstonii (strain ATCC 51303 / DSM 11347 / YP87)).